Here is a 300-residue protein sequence, read N- to C-terminus: Ubiquitin thioesterase otu2 (300 aa).

2 disordered regions span residues R23–D73 and T89–M141. Residues L48 to K61 are compositionally biased toward basic and acidic residues. Residues G62–Q71 are compositionally biased toward acidic residues. Residues T89–P109 show a composition bias toward polar residues. Over residues R115–M141 the composition is skewed to basic and acidic residues. The region spanning L161–R298 is the OTU domain.

It is found in the cytoplasm. It carries out the reaction Thiol-dependent hydrolysis of ester, thioester, amide, peptide and isopeptide bonds formed by the C-terminal Gly of ubiquitin (a 76-residue protein attached to proteins as an intracellular targeting signal).. Functionally, hydrolase that can remove conjugated ubiquitin from proteins and may therefore play an important regulatory role at the level of protein turnover by preventing degradation. In Schizosaccharomyces pombe (strain 972 / ATCC 24843) (Fission yeast), this protein is Ubiquitin thioesterase otu2 (otu2).